Consider the following 586-residue polypeptide: Maltogenic alpha-amylase (586 aa).

Ca(2+) contacts are provided by Asn147, Asn152, Asp153, Gly172, and Asp174. Positions 247 and 326 each coordinate substrate. The active-site Nucleophile is the Asp328. The active-site Proton donor is Glu357. Substrate contacts are provided by residues 423–424 (HD), Asp468, and Arg472.

The protein belongs to the glycosyl hydrolase 13 family. It depends on Ca(2+) as a cofactor.

It carries out the reaction hydrolysis of (1-&gt;4)-alpha-D-glucosidic linkages in polysaccharides so as to remove successive alpha-maltose residues from the non-reducing ends of the chains.. Functionally, converts starch into maltose. The sequence is that of Maltogenic alpha-amylase from Bacillus acidopullulyticus.